The primary structure comprises 297 residues: Bifunctional protein FolD (297 aa).

Residues 164 to 166 (GRS), S193, and I234 contribute to the NADP(+) site.

It belongs to the tetrahydrofolate dehydrogenase/cyclohydrolase family. In terms of assembly, homodimer.

It catalyses the reaction (6R)-5,10-methylene-5,6,7,8-tetrahydrofolate + NADP(+) = (6R)-5,10-methenyltetrahydrofolate + NADPH. It carries out the reaction (6R)-5,10-methenyltetrahydrofolate + H2O = (6R)-10-formyltetrahydrofolate + H(+). It participates in one-carbon metabolism; tetrahydrofolate interconversion. Functionally, catalyzes the oxidation of 5,10-methylenetetrahydrofolate to 5,10-methenyltetrahydrofolate and then the hydrolysis of 5,10-methenyltetrahydrofolate to 10-formyltetrahydrofolate. In Halobacterium salinarum (strain ATCC 700922 / JCM 11081 / NRC-1) (Halobacterium halobium), this protein is Bifunctional protein FolD.